A 415-amino-acid chain; its full sequence is tRNA(Met) cytidine acetate ligase (415 aa).

ATP contacts are provided by residues 7–20 (VVEYNPFHNGHLYH), glycine 101, asparagine 162, and 187–188 (RI).

It belongs to the TmcAL family. As to quaternary structure, homodimer.

Its subcellular location is the cytoplasm. The catalysed reaction is cytidine(34) in elongator tRNA(Met) + acetate + ATP = N(4)-acetylcytidine(34) in elongator tRNA(Met) + AMP + diphosphate. Functionally, catalyzes the formation of N(4)-acetylcytidine (ac(4)C) at the wobble position of elongator tRNA(Met), using acetate and ATP as substrates. First activates an acetate ion to form acetyladenylate (Ac-AMP) and then transfers the acetyl group to tRNA to form ac(4)C34. The sequence is that of tRNA(Met) cytidine acetate ligase from Bacillus subtilis (strain 168).